The sequence spans 988 residues: DNA polymerase (988 aa).

The protein belongs to the DNA polymerase type-B family. Interacts with A20. Component of the Uracil-DNA glycosylase(UDG)-A20-polymerase complex; A20 and UDG form a heterodimeric processivity factor that associates with E9 to form the processive polymerase holoenzyme.

The catalysed reaction is DNA(n) + a 2'-deoxyribonucleoside 5'-triphosphate = DNA(n+1) + diphosphate. Its function is as follows. Catalyzes DNA synthesis. Acquires processivity by associating with a heterodimeric processivity factor comprised of the viral A20 and D4 proteins, thereby forming the DNA polymerase holoenzyme. Displays 3'- to 5' exonuclease activity. Might participate in viral DNA recombination. Does not perform translesion synthesis across an abasic site. The polypeptide is DNA polymerase (POL) (Vertebrata (FPV)).